Consider the following 471-residue polypeptide: Rho GTPase-activating protein 15 (471 aa).

Residues 1–20 (MQKSTNSDIPVETLNPTRQG) form a disordered region. Serine 43 bears the Phosphoserine mark. The 111-residue stretch at 79-189 (MVEKEGYLQK…WFHAIKNAID (111 aa)) folds into the PH domain. Phosphoserine is present on residues serine 196, serine 199, and serine 243. The region spanning 281–470 (SHLHTLCERE…LMLSAYDQIF (190 aa)) is the Rho-GAP domain.

It is found in the cytoplasm. It localises to the membrane. Functionally, GTPase activator for the Rho-type GTPases by converting them to an inactive GDP-bound state. Has activity toward RAC1. Overexpression results in an increase in actin stress fibers and cell contraction. This is Rho GTPase-activating protein 15 (ARHGAP15) from Bos taurus (Bovine).